We begin with the raw amino-acid sequence, 555 residues long: Glucose-6-phosphate isomerase (555 aa).

Catalysis depends on E365, which acts as the Proton donor. Residues H396 and K522 contribute to the active site.

The protein belongs to the GPI family.

The protein localises to the cytoplasm. The catalysed reaction is alpha-D-glucose 6-phosphate = beta-D-fructose 6-phosphate. The protein operates within carbohydrate biosynthesis; gluconeogenesis. It functions in the pathway carbohydrate degradation; glycolysis; D-glyceraldehyde 3-phosphate and glycerone phosphate from D-glucose: step 2/4. Functionally, catalyzes the reversible isomerization of glucose-6-phosphate to fructose-6-phosphate. This is Glucose-6-phosphate isomerase from Psychrobacter cryohalolentis (strain ATCC BAA-1226 / DSM 17306 / VKM B-2378 / K5).